The chain runs to 645 residues: ATP-dependent zinc metalloprotease FtsH 3 (645 aa).

At 1 to 11 the chain is on the cytoplasmic side; sequence MQNKRNQSRVL. The helical transmembrane segment at 12 to 32 threads the bilayer; sequence WLLLIYITIGIFIYVGVNSLI. Over 33-110 the chain is Periplasmic; sequence GTPDVSKIEY…YVRSLENSWW (78 aa). A helical transmembrane segment spans residues 111–131; that stretch reads ISILTFLLPVFLLIFLFTFLF. At 132–645 the chain is on the cytoplasmic side; sequence RSSGGGANQG…ENNLIERKGI (514 aa). 202–209 is an ATP binding site; sequence GEPGTGKT. His424 is a Zn(2+) binding site. Residue Glu425 is part of the active site. Zn(2+) is bound by residues His428 and Asp501.

This sequence in the central section; belongs to the AAA ATPase family. The protein in the C-terminal section; belongs to the peptidase M41 family. As to quaternary structure, homohexamer. The cofactor is Zn(2+).

The protein resides in the cell inner membrane. Acts as a processive, ATP-dependent zinc metallopeptidase for both cytoplasmic and membrane proteins. Plays a role in the quality control of integral membrane proteins. The polypeptide is ATP-dependent zinc metalloprotease FtsH 3 (Petrotoga mobilis (strain DSM 10674 / SJ95)).